A 416-amino-acid polypeptide reads, in one-letter code: ASTRA-associated protein 1 (416 aa).

WD repeat units lie at residues 13–54 (KHET…PFAG), 58–95 (ETKA…AVAI), 111–147 (VYEV…SESI), and 234–273 (HYPE…VNVS).

This sequence belongs to the WD repeat ASA1 family. Component of the ASTRA chromatin remodeling machinery complex.

The protein localises to the nucleus. Its function is as follows. Component of the ASTRA complex involved in chromatin remodeling. This is ASTRA-associated protein 1 (ASA1) from Lachancea thermotolerans (strain ATCC 56472 / CBS 6340 / NRRL Y-8284) (Yeast).